Here is a 188-residue protein sequence, read N- to C-terminus: MDCRKMARFSYSVIWIMAISKVFELGLVAGLGHQEFARPSRGYLAFRDDSIWPQEEPAIRPRSSQRVPPMGIQHSKELNRTCCLNGGTCMLGSFCACPPSFYGRNCEHDVRKENCGSVPHDTWLPKKCSLCKCWHGQLRCFPQAFLPGCDGLVMDEHLVASRTPELPPSARTTTFMLVGICLSIQSYY.

The N-terminal stretch at Met1–Gly30 is a signal peptide. An EGF-like domain is found at Leu78 to Glu107. A glycan (N-linked (GlcNAc...) asparagine) is linked at Asn79. 6 disulfide bridges follow: Cys82-Cys89, Cys83-Cys95, Cys97-Cys106, Cys115-Cys133, Cys128-Cys149, and Cys131-Cys140. Asp150 carries the GPI-anchor amidated aspartate lipid modification. Residues Gly151–Tyr188 constitute a propeptide, removed in mature form.

Belongs to the EGF-CFC (Cripto-1/FRL1/Cryptic) family. As to quaternary structure, interacts with the activin type-1 receptor ACVR1B. Post-translationally, the GPI-anchor is attached to the protein in the endoplasmic reticulum and serves to target the protein to the cell surface. There, it is processed by GPI processing phospholipase A2 (TMEM8A), removing an acyl-chain at the sn-2 position of GPI and releasing CRIPTO as a lysophosphatidylinositol-bearing form, which is further cleaved by phospholipase D (GPLD1) into a soluble form. In terms of tissue distribution, preferentially expressed in gastric and colorectal carcinomas than in their normal counterparts. Expressed in breast and lung.

It localises to the cell membrane. The protein resides in the secreted. Functionally, GPI-anchored cell membrane protein involved in Nodal signaling. Cell-associated CRIPTO acts as a Nodal coreceptor in cis. Shedding of CRIPTO by TMEM8A modulates Nodal signaling by allowing soluble CRIPTO to act as a Nodal coreceptor on other cells. Could play a role in the determination of the epiblastic cells that subsequently give rise to the mesoderm. This Homo sapiens (Human) protein is Protein Cripto.